Consider the following 263-residue polypeptide: CRISPR-associated protein Cas5 2 (263 aa).

Belongs to the CRISPR-associated protein Cas5 family. Subtype I-A/Apern subfamily. Part of the aCascade ribonucleoprotein complex, minimally composed of Csa2 and Cas5a, which binds crRNA. Other possible components of aCascade in strain P1 are Cas6b (SSO1437) and Csa5 (SSO1443), while SSO1399, Cas5b (SSO1400) and SSO1401 have sometimes been seen weakly associated. Csa2 is probably the major RNA-binding subunit. The Csa2-Cas5a-crRNA complex also binds target DNA homologous to crRNA, probably forming an R-loop. Purified aCascade forms a filament about 6 nm in width.

CRISPR (clustered regularly interspaced short palindromic repeat) is an adaptive immune system that provides protection against mobile genetic elements (viruses, transposable elements and conjugative plasmids). CRISPR clusters contain spacers, sequences complementary to antecedent mobile elements, and target invading nucleic acids. CRISPR clusters are transcribed and processed into CRISPR RNA (crRNA). The sequence is that of CRISPR-associated protein Cas5 2 (cas5b) from Saccharolobus solfataricus (strain ATCC 35092 / DSM 1617 / JCM 11322 / P2) (Sulfolobus solfataricus).